The primary structure comprises 65 residues: DNA gyrase inhibitor YacG (65 aa).

The Zn(2+) site is built by C8, C11, C27, and C31. The disordered stretch occupies residues S43–K65. Residues D48–K65 show a composition bias toward basic and acidic residues.

It belongs to the DNA gyrase inhibitor YacG family. Interacts with GyrB. Requires Zn(2+) as cofactor.

Functionally, inhibits all the catalytic activities of DNA gyrase by preventing its interaction with DNA. Acts by binding directly to the C-terminal domain of GyrB, which probably disrupts DNA binding by the gyrase. The protein is DNA gyrase inhibitor YacG of Nitrosospira multiformis (strain ATCC 25196 / NCIMB 11849 / C 71).